Here is a 499-residue protein sequence, read N- to C-terminus: MLSKTSLLSLLSLAAGVVNADFGITTSDSYVINANSPNSLVFTVDRGSCDITSIVHYGTELQYSGKGSHIGSGLGTATVSATKSGDYIKVTCETDTLTQYMGVHDGDRIIHMATYITEEPSIGELRFIARLNSDVLPNEEPFGDVSNTADGEPIEGSDVFLVDGETRSKFYSSQRFIDDQRHCIAGDEHRVCMILNQYETSSGGPFHRDINSNNGGDYNSLYWYMNSGHVQLESYRMGLHGPYSMYFSRSGTPSTDIDTSFFADLDIEGYVAESGRGTVSGTASGADSSFDWVVHWYNDDAQYWTYTSSSGSFTSPAMKPGTYTMVYYQGEYVVATSEVTVSAGSSTSKDISGSVETGTTIFKIGDWDGQPTGFRNAENQLRMHPSDSRMSDWGPLTYTVGSSSLTDFPMAIFKSVNSPVTIKFTATSDQTGAATLRIRTTLSFAGGRPQATINDYEGSAPSAPTNLDSRGVTRGAYRGYGDVYDVSVPEGTIVEGENT.

Positions 1–20 (MLSKTSLLSLLSLAAGVVNA) are cleaved as a signal peptide. Disulfide bonds link Cys49/Cys92 and Cys183/Cys192.

The protein belongs to the polysaccharide lyase 4 family.

The protein localises to the secreted. The catalysed reaction is Endotype eliminative cleavage of L-alpha-rhamnopyranosyl-(1-&gt;4)-alpha-D-galactopyranosyluronic acid bonds of rhamnogalacturonan I domains in ramified hairy regions of pectin leaving L-rhamnopyranose at the reducing end and 4-deoxy-4,5-unsaturated D-galactopyranosyluronic acid at the non-reducing end.. Its function is as follows. Pectinolytic enzymes consist of four classes of enzymes: pectin lyase, polygalacturonase, pectin methylesterase and rhamnogalacturonase. Degrades the rhamnogalacturonan I (RG-I) backbone of pectin. This chain is Rhamnogalacturonate lyase A (rglA), found in Aspergillus niger.